A 545-amino-acid chain; its full sequence is Glucose-6-phosphate isomerase (545 aa).

E351 acts as the Proton donor in catalysis. Catalysis depends on residues H382 and K510.

It belongs to the GPI family.

It is found in the cytoplasm. It catalyses the reaction alpha-D-glucose 6-phosphate = beta-D-fructose 6-phosphate. It participates in carbohydrate biosynthesis; gluconeogenesis. Its pathway is carbohydrate degradation; glycolysis; D-glyceraldehyde 3-phosphate and glycerone phosphate from D-glucose: step 2/4. Catalyzes the reversible isomerization of glucose-6-phosphate to fructose-6-phosphate. This Shewanella sp. (strain MR-7) protein is Glucose-6-phosphate isomerase.